A 591-amino-acid polypeptide reads, in one-letter code: L-fucose isomerase (591 aa).

Active-site proton acceptor residues include glutamate 337 and aspartate 361. Mn(2+)-binding residues include glutamate 337, aspartate 361, and histidine 528.

It belongs to the L-fucose isomerase family. As to quaternary structure, homohexamer. Requires Mn(2+) as cofactor.

Its subcellular location is the cytoplasm. The catalysed reaction is L-fucose = L-fuculose. It participates in carbohydrate degradation; L-fucose degradation; L-lactaldehyde and glycerone phosphate from L-fucose: step 1/3. Functionally, converts the aldose L-fucose into the corresponding ketose L-fuculose. This Salmonella schwarzengrund (strain CVM19633) protein is L-fucose isomerase.